Reading from the N-terminus, the 277-residue chain is Large ribosomal subunit protein uL2c (277 aa).

Disordered stretches follow at residues Asn36–Gly56 and Met225–Ser259.

It belongs to the universal ribosomal protein uL2 family. Part of the 50S ribosomal subunit.

It localises to the plastid. Its subcellular location is the chloroplast. The chain is Large ribosomal subunit protein uL2c (rpl2) from Psilotum nudum (Whisk fern).